The chain runs to 501 residues: Aspartate--tRNA ligase, cytoplasmic (501 aa).

Thr-52 carries the phosphothreonine modification. N6-acetyllysine is present on Lys-74. Residue Glu-229 participates in L-aspartate binding. Ser-249 is subject to Phosphoserine. The interval 251–254 is aspartate; the sequence is QLYK. Residue Arg-273 coordinates L-aspartate. Residues 273–275 and 281–283 contribute to the ATP site; these read RAE and RHL. Position 374 is an N6-acetyllysine (Lys-374). The binding site for the 3'-end of tRNA stretch occupies residues 411-415; the sequence is KQSNS. Glu-424 contacts ATP. Positions 427 and 431 each coordinate L-aspartate. An ATP-binding site is contributed by 472 to 475; the sequence is GLER. Thr-500 carries the phosphothreonine; by PKA modification.

It belongs to the class-II aminoacyl-tRNA synthetase family. Type 2 subfamily. Homodimer. Part of a multisubunit complex that groups tRNA ligases for Arg (RARS1), Asp (DARS1), Gln (QARS1), Ile (IARS1), Leu (LARS1), Lys (KARS1), Met (MARS1) the bifunctional ligase for Glu and Pro (EPRS1) and the auxiliary subunits AIMP1/p43, AIMP2/p38 and EEF1E1/p18. In terms of tissue distribution, expression in the developing and adult brain shows similar patterns. Highly expressed in the ventricular and subventricular zones, including hippocampal subfields, the midlateral temporal cortex and the frontal polar cortex. The cerebellum, cerebral cortex, hippocampus, and lateral ventricle show preferential neuronal expression. Expression in the peripheral neurons is evident in the colon.

It is found in the cytoplasm. The protein resides in the cytosol. The enzyme catalyses tRNA(Asp) + L-aspartate + ATP = L-aspartyl-tRNA(Asp) + AMP + diphosphate. In terms of biological role, catalyzes the specific attachment of an amino acid to its cognate tRNA in a 2 step reaction: the amino acid (AA) is first activated by ATP to form AA-AMP and then transferred to the acceptor end of the tRNA. The polypeptide is Aspartate--tRNA ligase, cytoplasmic (Homo sapiens (Human)).